Reading from the N-terminus, the 99-residue chain is Integration host factor subunit alpha (99 aa).

Positions 51–71 (NFDLRDKNQRPGRNPKTGEDI) are disordered.

It belongs to the bacterial histone-like protein family. Heterodimer of an alpha and a beta chain.

Its function is as follows. This protein is one of the two subunits of integration host factor, a specific DNA-binding protein that functions in genetic recombination as well as in transcriptional and translational control. This chain is Integration host factor subunit alpha (ihfA), found in Dickeya dadantii (strain 3937) (Erwinia chrysanthemi (strain 3937)).